Consider the following 489-residue polypeptide: Rhamnulokinase (489 aa).

ATP is bound at residue 13–17 (ASSGR). The cysteines at positions 68 and 222 are disulfide-linked. Residues glycine 83 and 236-238 (HDT) contribute to the substrate site. The active-site Proton acceptor is aspartate 237. Threonine 259 contacts ATP. A substrate-binding site is contributed by asparagine 296. Residue glutamine 304 participates in ATP binding. Cysteines 353 and 370 form a disulfide. Glycine 402 is an ATP binding site. A disulfide bridge connects residues cysteine 413 and cysteine 417.

The protein belongs to the rhamnulokinase family. The cofactor is Mg(2+).

It carries out the reaction L-rhamnulose + ATP = L-rhamnulose 1-phosphate + ADP + H(+). It participates in carbohydrate degradation; L-rhamnose degradation; glycerone phosphate from L-rhamnose: step 2/3. Involved in the catabolism of L-rhamnose (6-deoxy-L-mannose). Catalyzes the transfer of the gamma-phosphate group from ATP to the 1-hydroxyl group of L-rhamnulose to yield L-rhamnulose 1-phosphate. This is Rhamnulokinase from Salmonella paratyphi A (strain AKU_12601).